A 733-amino-acid polypeptide reads, in one-letter code: DNA replication licensing factor Mcm5 (733 aa).

The MCM domain occupies 328-534 (IYERLSQSLA…RDITLAKHII (207 aa)). Position 368 (R368) interacts with ADP. Positions 509-512 (SRFD) match the Arginine finger motif.

The protein belongs to the MCM family. As to quaternary structure, component of the Mcm2-7 complex. The complex forms a toroidal hexameric ring with the proposed subunit order Mcm2-Mcm6-Mcm4-Mcm7-Mcm3-Mcm5.

The protein resides in the nucleus. It is found in the cytoplasm. The protein localises to the cytosol. The catalysed reaction is ATP + H2O = ADP + phosphate + H(+). In terms of biological role, acts as a component of the Mcm2-7 complex (Mcm complex) which is the putative replicative helicase essential for 'once per cell cycle' DNA replication initiation and elongation in eukaryotic cells. Core component of CDC45-MCM-GINS (CMG) helicase, the molecular machine that unwinds template DNA during replication, and around which the replisome is built. The active ATPase sites in the Mcm2-7 ring are formed through the interaction surfaces of two neighboring subunits such that a critical structure of a conserved arginine finger motif is provided in trans relative to the ATP-binding site of the Walker A box of the adjacent subunit. The six ATPase active sites, however, are likely to contribute differentially to the complex helicase activity. The chain is DNA replication licensing factor Mcm5 (Mcm5) from Drosophila melanogaster (Fruit fly).